The sequence spans 505 residues: MSEQKPQVAEQAQELNSELQARREKLAVLRGKGIAFPNDFRRENLSDQLHAEFDSKENEELEALNIDVTVAGRMMTRRIMGKASFVTLQDVGGRIQLYVSRDDLPEGVYNEEFKKWDLGDILGARGKLFKTKTGELSIHCSELRLLTKALRPLPDKFHGLADQETRYRQRYLDLIANDESRHTFKVRSQVMSGIRSFMVEKGFMEVETPMMQVIPGGASARPFVTHHNALDIDMYLRIAPELYLKRLVVGGFERVFEINRNFRNEGVSPRHNPEFTMMELYMAYADYKDLIVLTEELFRTLTETILGSSVVQYGEQTFDFGKPFAKLTMKEAICKYRPETNVADLDDMDKAVAIAESLGIKVEKSWGLGRIQCEIFEETAESHLIQPTFITEYPAEVSPLARRNDDNPFITDRFEFFIGGREIGNGFSELNDAEDQAQRFADQVSAKEAGDDEAMFYDEDYITALEHGLPPTAGLGIGIDRMVMLFTNSHTIRDVILFPAMRPVK.

2 residues coordinate Mg(2+): E415 and E422.

It belongs to the class-II aminoacyl-tRNA synthetase family. In terms of assembly, homodimer. Mg(2+) serves as cofactor.

The protein localises to the cytoplasm. The enzyme catalyses tRNA(Lys) + L-lysine + ATP = L-lysyl-tRNA(Lys) + AMP + diphosphate. The polypeptide is Lysine--tRNA ligase (Yersinia pseudotuberculosis serotype O:1b (strain IP 31758)).